The primary structure comprises 347 residues: Ribosomal RNA large subunit methyltransferase M (347 aa).

S-adenosyl-L-methionine-binding positions include serine 184, alanine 217–glycine 220, aspartate 236, aspartate 256, and aspartate 272. Lysine 301 (proton acceptor) is an active-site residue.

The protein belongs to the class I-like SAM-binding methyltransferase superfamily. RNA methyltransferase RlmE family. RlmM subfamily. As to quaternary structure, monomer.

Its subcellular location is the cytoplasm. The enzyme catalyses cytidine(2498) in 23S rRNA + S-adenosyl-L-methionine = 2'-O-methylcytidine(2498) in 23S rRNA + S-adenosyl-L-homocysteine + H(+). In terms of biological role, catalyzes the 2'-O-methylation at nucleotide C2498 in 23S rRNA. This is Ribosomal RNA large subunit methyltransferase M from Xanthomonas campestris pv. campestris (strain 8004).